Here is a 181-residue protein sequence, read N- to C-terminus: Transcription antitermination protein NusB (181 aa).

The segment at 1–36 (MTEDNNKAAGAKPRPARQVRTGLTSTGARKASAKSN) is disordered.

The protein belongs to the NusB family.

Functionally, involved in transcription antitermination. Required for transcription of ribosomal RNA (rRNA) genes. Binds specifically to the boxA antiterminator sequence of the ribosomal RNA (rrn) operons. In Variovorax paradoxus (strain S110), this protein is Transcription antitermination protein NusB.